A 51-amino-acid polypeptide reads, in one-letter code: Insulin (51 aa).

Cystine bridges form between Cys-8/Cys-37, Cys-20/Cys-50, and Cys-36/Cys-41.

It belongs to the insulin family. As to quaternary structure, heterodimer of a B chain and an A chain linked by two disulfide bonds.

Its subcellular location is the secreted. In terms of biological role, insulin decreases blood glucose concentration. It increases cell permeability to monosaccharides, amino acids and fatty acids. It accelerates glycolysis, the pentose phosphate cycle, and glycogen synthesis in liver. In Gadus morhua subsp. callarias (Baltic cod), this protein is Insulin (ins).